We begin with the raw amino-acid sequence, 341 residues long: Tryptophan--tRNA ligase (341 aa).

Residues 11-13 (RPT) and 19-20 (GH) contribute to the ATP site. Positions 12–20 (PTGKLHIGH) match the 'HIGH' region motif. Asp-140 contacts L-tryptophan. ATP-binding positions include 152-154 (GED), Leu-193, and 201-205 (KMSKS). A 'KMSKS' region motif is present at residues 201 to 205 (KMSKS).

The protein belongs to the class-I aminoacyl-tRNA synthetase family. In terms of assembly, homodimer.

The protein resides in the cytoplasm. It carries out the reaction tRNA(Trp) + L-tryptophan + ATP = L-tryptophyl-tRNA(Trp) + AMP + diphosphate + H(+). Functionally, catalyzes the attachment of tryptophan to tRNA(Trp). The polypeptide is Tryptophan--tRNA ligase (Clostridium longisporum).